Consider the following 130-residue polypeptide: Small ribosomal subunit protein uS9 (130 aa).

This sequence belongs to the universal ribosomal protein uS9 family.

The polypeptide is Small ribosomal subunit protein uS9 (Streptococcus mutans serotype c (strain ATCC 700610 / UA159)).